Here is a 369-residue protein sequence, read N- to C-terminus: 2-aminoethylphosphonate--pyruvate transaminase (369 aa).

K193 carries the N6-(pyridoxal phosphate)lysine modification.

The protein belongs to the class-V pyridoxal-phosphate-dependent aminotransferase family. PhnW subfamily. As to quaternary structure, homodimer. Requires pyridoxal 5'-phosphate as cofactor.

It carries out the reaction (2-aminoethyl)phosphonate + pyruvate = phosphonoacetaldehyde + L-alanine. Involved in phosphonate degradation. This is 2-aminoethylphosphonate--pyruvate transaminase from Pseudomonas fluorescens (strain ATCC BAA-477 / NRRL B-23932 / Pf-5).